Consider the following 537-residue polypeptide: [Pyruvate dehydrogenase [acetyl-transferring]]-phosphatase 1, mitochondrial (537 aa).

Residues 1 to 71 (MPAPTQLFFP…WWQYTQGRRY (71 aa)) constitute a mitochondrion transit peptide. Positions 109–525 (ILGFDSNQLP…DDITIIVVQF (417 aa)) constitute a PPM-type phosphatase domain. Mn(2+) is bound by residues Asp-144 and Gly-145. N6-acetyllysine is present on Lys-202. 2 residues coordinate Mn(2+): Asp-418 and Asp-516.

The protein belongs to the PP2C family. As to quaternary structure, heterodimer of a catalytic (PDP1) and a regulatory (PDPR) subunit. Mn(2+) is required as a cofactor. It depends on Mg(2+) as a cofactor.

The protein localises to the mitochondrion. It catalyses the reaction O-phospho-L-seryl-[pyruvate dehydrogenase E1 alpha subunit] + H2O = L-seryl-[pyruvate dehydrogenase E1 alpha subunit] + phosphate. Magnesium-dependent and calcium-stimulated. PDP1 activity strongly depends on its Ca(2+)-dependent binding to the lipoyl domain of E2 subunit of component of the pyruvate dehydrogenase complex. Its function is as follows. Mitochondrial enzyme that catalyzes the dephosphorylation and concomitant reactivation of the alpha subunit of the E1 component of the pyruvate dehydrogenase complex (PDC), thereby stimulating the conversion of pyruvate into acetyl-CoA. This chain is [Pyruvate dehydrogenase [acetyl-transferring]]-phosphatase 1, mitochondrial, found in Homo sapiens (Human).